A 260-amino-acid chain; its full sequence is Tryptophan synthase alpha chain (260 aa).

Residues glutamate 52 and aspartate 63 each act as proton acceptor in the active site.

Belongs to the TrpA family. Tetramer of two alpha and two beta chains.

The enzyme catalyses (1S,2R)-1-C-(indol-3-yl)glycerol 3-phosphate + L-serine = D-glyceraldehyde 3-phosphate + L-tryptophan + H2O. It functions in the pathway amino-acid biosynthesis; L-tryptophan biosynthesis; L-tryptophan from chorismate: step 5/5. Functionally, the alpha subunit is responsible for the aldol cleavage of indoleglycerol phosphate to indole and glyceraldehyde 3-phosphate. The polypeptide is Tryptophan synthase alpha chain (Streptococcus thermophilus (strain ATCC BAA-250 / LMG 18311)).